Consider the following 64-residue polypeptide: Temporin-ALh (64 aa).

The N-terminal stretch at 1-22 (MFPLKKSLLLLFFLATINLSLC) is a signal peptide. A propeptide spanning residues 23–46 (EQERNAEEERRDEPDERNAEVEKR) is cleaved from the precursor. Ser62 carries the post-translational modification Serine amide.

The protein belongs to the frog skin active peptide (FSAP) family. Temporin subfamily. In terms of tissue distribution, expressed by the skin glands.

It is found in the secreted. Functionally, antimicrobial peptide with activity against Gram-positive and Gram-negative bacteria and against fungi. Has been tested against S.aureus (MIC=2.5 ug/mL), B.pumilus (MIC=7.5 ug/mL), B.cereus (MIC=75.0 ug/mL), E.coli (MIC=5.0 ug/mL), B.dysenteriae (MIC=20.0 ug/mL), A.cacoaceticus (MIC=60.0 ug/mL), P.aeruginosa (MIC=2.5 ug/mL) and C.albicans (MIC=2.5 ug/mL). Also shows a weak hemolytic activity. The sequence is that of Temporin-ALh from Amolops loloensis (Lolokou Sucker Frog).